Consider the following 388-residue polypeptide: Chorismate synthase (388 aa).

2 residues coordinate NADP(+): Arg-39 and Arg-45. FMN-binding positions include 132–134 (RSS), 251–252 (NA), Gly-296, 311–315 (KPIPT), and Arg-337.

It belongs to the chorismate synthase family. As to quaternary structure, homotetramer. FMNH2 serves as cofactor.

It catalyses the reaction 5-O-(1-carboxyvinyl)-3-phosphoshikimate = chorismate + phosphate. Its pathway is metabolic intermediate biosynthesis; chorismate biosynthesis; chorismate from D-erythrose 4-phosphate and phosphoenolpyruvate: step 7/7. Catalyzes the anti-1,4-elimination of the C-3 phosphate and the C-6 proR hydrogen from 5-enolpyruvylshikimate-3-phosphate (EPSP) to yield chorismate, which is the branch point compound that serves as the starting substrate for the three terminal pathways of aromatic amino acid biosynthesis. This reaction introduces a second double bond into the aromatic ring system. This Staphylococcus haemolyticus (strain JCSC1435) protein is Chorismate synthase.